Consider the following 420-residue polypeptide: MGEKKPEPLDFVKDFQEYLTQQTHHVNMISGSVSGDKEAEALQGAGTDGDQNGLDHPSVEVSLDENSGMLVDGFERTFDGKLKCRYCNYASKGTARLIEHIRIHTGEKPHRCHLCPFASAYERHLEAHMRSHTGEKPYKCELCSFRCSDRSNLSHHRRRKHKMVPIKGTRSSLSSKKMWGVLQKKTSNLGYSRRALINLSPPSMVVQKPDYLNDFTHEIPNIQTDSYESMAKTTPTGGLPRDPQELMVDNPLNQLSTLAGQLSSLPPENQNPASPDVVPCPDEKPFMIQQPSTQAVVSAVSASIPQSSSPTSPEPRPSHSQRNYSPVAGPSSEPSAHTSTPSIGNSQPSTPAPALPVQDPQLLHHCQHCDMYFFADNILYTIHMGCHGYENPFQCNICGCKCKNKYDFACHFARGQHNQH.

A Glycyl lysine isopeptide (Lys-Gly) (interchain with G-Cter in SUMO2) cross-link involves residue K5. 3 consecutive C2H2-type zinc fingers follow at residues 82 to 104 (LKCRYCNYASKGTARLIEHIRIH), 110 to 132 (HRCHLCPFASAYERHLEAHMRSH), and 138 to 161 (YKCELCSFRCSDRSNLSHHRRRKH). A Glycyl lysine isopeptide (Lys-Gly) (interchain with G-Cter in SUMO2) cross-link involves residue K185. 2 stretches are compositionally biased toward polar residues: residues 223–236 (QTDSYESMAKTTPT) and 262–273 (LSSLPPENQNPA). Disordered stretches follow at residues 223–247 (QTDSYESMAKTTPTGGLPRDPQELM) and 262–356 (LSSL…PALP). The segment covering 290–311 (QPSTQAVVSAVSASIPQSSSPT) has biased composition (low complexity). Polar residues predominate over residues 332–349 (SEPSAHTSTPSIGNSQPS). Residues 364–387 (HHCQHCDMYFFADNILYTIHMGCH) form a C2H2-type 4; degenerate zinc finger. Residues 393-417 (FQCNICGCKCKNKYDFACHFARGQH) form a C2H2-type 5 zinc finger.

It belongs to the Ikaros C2H2-type zinc-finger protein family. In terms of assembly, self-associates. Interacts with other family members; IKZF1, IKZF2, IKZF3 and IKZF4.

It is found in the nucleus. Functionally, transcriptional repressor that binds the core 5'GNNTGTNG-3' DNA consensus sequence. Involved in megakaryocyte differentiation. The chain is Zinc finger protein Pegasus (IKZF5) from Pongo abelii (Sumatran orangutan).